The primary structure comprises 438 residues: 3-phosphoshikimate 1-carboxyvinyltransferase (438 aa).

Lys-26, Ser-27, and Arg-31 together coordinate 3-phosphoshikimate. Lys-26 lines the phosphoenolpyruvate pocket. Positions 99 and 127 each coordinate phosphoenolpyruvate. Residues Ser-170, Ser-171, Gln-172, Ser-199, Glu-314, and His-343 each contribute to the 3-phosphoshikimate site. Gln-172 serves as a coordination point for phosphoenolpyruvate. Residue Glu-314 is the Proton acceptor of the active site. Residues Arg-347, Arg-388, and Lys-413 each contribute to the phosphoenolpyruvate site.

This sequence belongs to the EPSP synthase family. Monomer.

The protein resides in the cytoplasm. It catalyses the reaction 3-phosphoshikimate + phosphoenolpyruvate = 5-O-(1-carboxyvinyl)-3-phosphoshikimate + phosphate. It participates in metabolic intermediate biosynthesis; chorismate biosynthesis; chorismate from D-erythrose 4-phosphate and phosphoenolpyruvate: step 6/7. In terms of biological role, catalyzes the transfer of the enolpyruvyl moiety of phosphoenolpyruvate (PEP) to the 5-hydroxyl of shikimate-3-phosphate (S3P) to produce enolpyruvyl shikimate-3-phosphate and inorganic phosphate. This chain is 3-phosphoshikimate 1-carboxyvinyltransferase, found in Mycobacterium sp. (strain MCS).